The primary structure comprises 297 residues: Lipoprotein NlpD/LppB homolog (297 aa).

The signal sequence occupies residues 1-22 (MDKGEGLRLAATLRQWTRLYGG). Residue C23 is the site of N-palmitoyl cysteine attachment. C23 carries S-diacylglycerol cysteine lipidation. The LysM domain occupies 67-111 (GQYIVRRGDTLYSIAFRFGWDWKALAARNGIAPPYTIQVGQAIQF). The tract at residues 134–168 (TKPTPVPPAVSTSVPAKPAPAPASTTTPPSSGATP) is disordered.

Belongs to the E.coli NlpD/Haemophilus LppB family.

It localises to the cell inner membrane. This is Lipoprotein NlpD/LppB homolog from Pseudomonas aeruginosa (strain ATCC 15692 / DSM 22644 / CIP 104116 / JCM 14847 / LMG 12228 / 1C / PRS 101 / PAO1).